A 140-amino-acid chain; its full sequence is Small ribosomal subunit protein bS6 (140 aa).

The segment at 96-140 is disordered; it reads VTGQSEMLKAEENRSERRERRERPENAESNDGDDSDSNDSDNADE. Residues 103–121 are compositionally biased toward basic and acidic residues; that stretch reads LKAEENRSERRERRERPEN. Positions 123-140 are enriched in acidic residues; the sequence is ESNDGDDSDSNDSDNADE.

The protein belongs to the bacterial ribosomal protein bS6 family.

Its function is as follows. Binds together with bS18 to 16S ribosomal RNA. This is Small ribosomal subunit protein bS6 from Ectopseudomonas mendocina (strain ymp) (Pseudomonas mendocina).